A 505-amino-acid polypeptide reads, in one-letter code: Betaine aldehyde dehydrogenase (505 aa).

Position 239–244 (239–244) interacts with NAD(+); it reads GSTATG. The Proton acceptor role is filled by Glu-261. Residue Cys-296 is the Nucleophile of the active site. The Microbody targeting signal signature appears at 503–505; that stretch reads SKL.

This sequence belongs to the aldehyde dehydrogenase family. Homodimer.

Its subcellular location is the peroxisome. The catalysed reaction is betaine aldehyde + NAD(+) + H2O = glycine betaine + NADH + 2 H(+). The protein operates within amine and polyamine biosynthesis; betaine biosynthesis via choline pathway; betaine from betaine aldehyde: step 1/1. The polypeptide is Betaine aldehyde dehydrogenase (Hordeum vulgare (Barley)).